The sequence spans 268 residues: Activator of basal transcription 1 (268 aa).

Residues lysine 6–asparagine 38 adopt a coiled-coil conformation. The RRM domain maps to glycine 47 to leucine 144. Residues alanine 163–glutamine 193 adopt a coiled-coil conformation. Positions alanine 200–glutamine 242 are disordered. Positions arginine 206–proline 217 are enriched in polar residues.

This sequence belongs to the ESF2/ABP1 family. Interacts with IGHMBP2. Interacts with ESF1/ABTAP.

Its subcellular location is the nucleus. The protein resides in the nucleolus. May be a novel TATA-binding protein (TBP) which can function as a basal transcription activator. Can act as a regulator of basal transcription for class II genes. This is Activator of basal transcription 1 (Abt1) from Rattus norvegicus (Rat).